The chain runs to 404 residues: Inner membrane transport protein YdiM (404 aa).

Topologically, residues 1 to 5 are periplasmic; that stretch reads MKNPY. Residues 6–26 form a helical membrane-spanning segment; sequence FPTALGLYFNYLVHGMGVLLM. At 27-43 the chain is on the cytoplasmic side; that stretch reads SLNMASLETLWQTNAAG. A helical transmembrane segment spans residues 44–64; sequence VSIVISSLGIGRLSVLLFAGL. Over 65–84 the chain is Periplasmic; sequence LSDRFGRRPFIMLGMCCYMA. A helical membrane pass occupies residues 85–105; it reads FFFGILQTNNIIIAYVFGFLA. Residues 106–132 are Cytoplasmic-facing; the sequence is GMANSFLDAGTYPSLMEAFPRSPGTAN. Residues 133–153 form a helical membrane-spanning segment; the sequence is ILIKAFVSSGQFLLPLIISLL. The Periplasmic portion of the chain corresponds to 154–157; the sequence is VWAE. A helical transmembrane segment spans residues 158–178; that stretch reads LWFGWSFMIAAGIMFINALFL. The Cytoplasmic segment spans residues 179 to 206; it reads YRCTFPPHPGRRLPVIKKTTSSTEHRCS. A helical membrane pass occupies residues 207–227; sequence IIDLASYTLYGYISMATFYLV. The Periplasmic segment spans residues 228–246; that stretch reads SQWLAQYGQFVAGMSYTMS. A helical transmembrane segment spans residues 247–267; that stretch reads IKLLSIYTVGSLLCVFITAPL. At 268 to 273 the chain is on the cytoplasmic side; that stretch reads IRNTVR. Residues 274-294 traverse the membrane as a helical segment; sequence PTTLLMLYTFISFIALFTVCL. Topologically, residues 295-296 are periplasmic; it reads HP. Residues 297-317 traverse the membrane as a helical segment; it reads TFYVVIIFAFVIGFTSAGGVV. Over 318–336 the chain is Cytoplasmic; the sequence is QIGLTLMAERFPYAKGKAT. Residues 337-357 traverse the membrane as a helical segment; the sequence is GIYYSAGSIATFTIPLITAHL. The Periplasmic portion of the chain corresponds to 358 to 364; that stretch reads SQRSIAD. The helical transmembrane segment at 365 to 385 threads the bilayer; sequence IMWFDTAIAAIGFLLALFIGL. Residues 386–404 are Cytoplasmic-facing; it reads RSRKKTRHHSLKENVAPGG.

It belongs to the major facilitator superfamily.

It is found in the cell inner membrane. The polypeptide is Inner membrane transport protein YdiM (ydiM) (Escherichia coli (strain K12)).